A 345-amino-acid chain; its full sequence is Aurora kinase B (345 aa).

Positions 1–25 (MAQKENAYPWPYGSKTSQSGLNTLS) are disordered. The segment covering 14–25 (SKTSQSGLNTLS) has biased composition (polar residues). Residue T35 is modified to Phosphothreonine. The tract at residues 50–77 (TAAPGQKLAENKSQGSTASQGSQNKQPF) is disordered. Polar residues predominate over residues 60–77 (NKSQGSTASQGSQNKQPF). S62 carries the phosphoserine modification. Residues 82-332 (FEIGRPLGKG…LAEVAAHPWV (251 aa)) form the Protein kinase domain. ATP-binding positions include 88 to 96 (LGKGKFGNV) and K111. Residue D205 is the Proton acceptor of the active site. Residue K220 is modified to N6-acetyllysine. Phosphoserine is present on S232. T237 carries the phosphothreonine; by autocatalysis modification.

It belongs to the protein kinase superfamily. Ser/Thr protein kinase family. Aurora subfamily. As to quaternary structure, component of the chromosomal passenger complex (CPC) composed of at least BIRC5/survivin, CDCA8/borealin, INCENP, AURKB or AURKC; predominantly independent AURKB- and AURKC-containing complexes exist. Associates with RACGAP1 during M phase. Interacts with SPDYC; this interaction may be required for proper localization of active, Thr-237-phosphorylated AURKB form during prometaphase and metaphase. Interacts with p53/TP53. Interacts (via the middle kinase domain) with NOC2L (via the N- and C-terminus domains). Interacts with CDCA1. Interacts with EVI5. Interacts with JTB. Interacts with NDC80. Interacts with PSMA3. Interacts with RNF2/RING1B. Interacts with SEPTIN1. Interacts with SIRT2. Interacts with TACC1. Interacts with TTC28. Post-translationally, the phosphorylation of Thr-237 requires the binding to INCENP and occurs by means of an autophosphorylation mechanism. Thr-237 phosphorylation is indispensable for the AURKB kinase activity. In terms of processing, acetylated at Lys-220 by KAT5 at kinetochores, increasing AURKB activity and promoting accurate chromosome segregation in mitosis. Ubiquitinated by different BCR (BTB-CUL3-RBX1) E3 ubiquitin ligase complexes. Ubiquitinated by the BCR(KLHL9-KLHL13) E3 ubiquitin ligase complex, ubiquitination leads to removal from mitotic chromosomes and is required for cytokinesis. During anaphase, the BCR(KLHL21) E3 ubiquitin ligase complex recruits the CPC complex from chromosomes to the spindle midzone and mediates the ubiquitination of AURKB. Ubiquitination of AURKB by BCR(KLHL21) E3 ubiquitin ligase complex may not lead to its degradation by the proteasome. Deubiquitinated by USP35; inhibiting CDH1-mediated degradation of AURKB. In terms of tissue distribution, expressed in testis, intestine and spleen. All of them are tissues that contain a large number of proliferating cells. Expressed during S phase, in a cell-cycle-dependent fashion.

It localises to the nucleus. The protein localises to the chromosome. It is found in the centromere. Its subcellular location is the kinetochore. The protein resides in the cytoplasm. It localises to the cytoskeleton. The protein localises to the spindle. It is found in the midbody. The catalysed reaction is L-seryl-[protein] + ATP = O-phospho-L-seryl-[protein] + ADP + H(+). The enzyme catalyses L-threonyl-[protein] + ATP = O-phospho-L-threonyl-[protein] + ADP + H(+). Its activity is regulated as follows. Activity is greatly increased when AURKB is within the CPC complex. In particular, AURKB-phosphorylated INCENP acts as an activator of AURKB. Positive feedback between HASPIN and AURKB contributes to CPC localization. Serine/threonine-protein kinase component of the chromosomal passenger complex (CPC), a complex that acts as a key regulator of mitosis. The CPC complex has essential functions at the centromere in ensuring correct chromosome alignment and segregation and is required for chromatin-induced microtubule stabilization and spindle assembly. Involved in the bipolar attachment of spindle microtubules to kinetochores and is a key regulator for the onset of cytokinesis during mitosis. Required for central/midzone spindle assembly and cleavage furrow formation. Key component of the cytokinesis checkpoint, a process required to delay abscission to prevent both premature resolution of intercellular chromosome bridges and accumulation of DNA damage: phosphorylates CHMP4C, leading to retain abscission-competent VPS4 (VPS4A and/or VPS4B) at the midbody ring until abscission checkpoint signaling is terminated at late cytokinesis. AURKB phosphorylates the CPC complex subunits BIRC5/survivin, CDCA8/borealin and INCENP. Phosphorylation of INCENP leads to increased AURKB activity. Other known AURKB substrates involved in centromeric functions and mitosis are CENPA, DES/desmin, GPAF, KIF2C, NSUN2, RACGAP1, SEPTIN1, VIM/vimentin, HASPIN, and histone H3. A positive feedback loop involving HASPIN and AURKB contributes to localization of CPC to centromeres. Phosphorylation of VIM controls vimentin filament segregation in cytokinetic process, whereas histone H3 is phosphorylated at 'Ser-10' and 'Ser-28' during mitosis (H3S10ph and H3S28ph, respectively). AURKB is also required for kinetochore localization of BUB1 and SGO1. Phosphorylation of p53/TP53 negatively regulates its transcriptional activity. Key regulator of active promoters in resting B- and T-lymphocytes: acts by mediating phosphorylation of H3S28ph at active promoters in resting B-cells, inhibiting RNF2/RING1B-mediated ubiquitination of histone H2A and enhancing binding and activity of the USP16 deubiquitinase at transcribed genes. Acts as an inhibitor of CGAS during mitosis: catalyzes phosphorylation of the N-terminus of CGAS during the G2-M transition, blocking CGAS liquid phase separation and activation, and thereby preventing CGAS-induced autoimmunity. Phosphorylates KRT5 during anaphase and telophase. Phosphorylates ATXN10 which promotes phosphorylation of ATXN10 by PLK1 and may play a role in the regulation of cytokinesis and stimulating the proteasomal degradation of ATXN10. The chain is Aurora kinase B (Aurkb) from Mus musculus (Mouse).